The chain runs to 381 residues: Erythronate-4-phosphate dehydrogenase (381 aa).

2 residues coordinate substrate: Ser-45 and Thr-67. Residues Asp-148, 207–209, and Asp-233 contribute to the NAD(+) site; that span reads ASR. Arg-209 is a catalytic residue. The active site involves Glu-238. Catalysis depends on His-255, which acts as the Proton donor. Gly-258 serves as a coordination point for NAD(+).

This sequence belongs to the D-isomer specific 2-hydroxyacid dehydrogenase family. PdxB subfamily. In terms of assembly, homodimer.

The protein resides in the cytoplasm. The catalysed reaction is 4-phospho-D-erythronate + NAD(+) = (R)-3-hydroxy-2-oxo-4-phosphooxybutanoate + NADH + H(+). The protein operates within cofactor biosynthesis; pyridoxine 5'-phosphate biosynthesis; pyridoxine 5'-phosphate from D-erythrose 4-phosphate: step 2/5. In terms of biological role, catalyzes the oxidation of erythronate-4-phosphate to 3-hydroxy-2-oxo-4-phosphonooxybutanoate. This Idiomarina loihiensis (strain ATCC BAA-735 / DSM 15497 / L2-TR) protein is Erythronate-4-phosphate dehydrogenase.